The following is a 902-amino-acid chain: Glutamate receptor 4 (902 aa).

A signal peptide spans Met1–Met20. At Ala22–Ala544 the chain is on the extracellular side. Asn52, Asn56, Asn258, Asn371, Asn407, and Asn414 each carry an N-linked (GlcNAc...) asparagine glycan. Cys84 and Cys331 are disulfide-bonded. Pro500, Thr502, and Arg507 together coordinate L-glutamate. Residues Tyr545 to Val565 form a helical membrane-spanning segment. The Cytoplasmic segment spans residues Ser566 to Glu592. The segment at residues Phe593 to Gln608 is an intramembrane region (helical; Pore-forming). Residues Gln609–Cys611 lie within the membrane without spanning it. Residue Cys611 is the site of S-palmitoyl cysteine attachment. Residues Asp612–Ser617 lie on the Cytoplasmic side of the membrane. A helical membrane pass occupies residues Leu618–Tyr638. Over Thr639–Asn813 the chain is Extracellular. Positions 676, 677, and 727 each coordinate L-glutamate. An intrachain disulfide couples Cys740 to Cys795. The chain crosses the membrane as a helical span at residues Val814–Ile834. The Cytoplasmic segment spans residues Glu835–Pro902. Residue Cys837 is the site of S-palmitoyl cysteine attachment. A Phosphoserine; by PKC/PRKCG modification is found at Ser862.

This sequence belongs to the glutamate-gated ion channel (TC 1.A.10.1) family. GRIA4 subfamily. Homotetramer or heterotetramer of pore-forming glutamate receptor subunits. Tetramers may be formed by the dimerization of dimers. Interacts with EPB41L1 via its C-terminus. Isoform 3 interacts with PICK1. Found in a complex with GRIA1, GRIA2, GRIA3, CNIH2, CNIH3, CACNG2, CACNG3, CACNG4, CACNG5, CACNG7 and CACNG8. Interacts with CACNG5 and PRKCG. Found in a complex with GRIA1, GRIA2, GRIA3, DLG4, CACNG8 and CNIH2. Palmitoylated. Depalmitoylated upon L-glutamate stimulation. ZDHHC3/GODZ specifically palmitoylates Cys-611, which leads to Golgi retention and decreased cell surface expression. In contrast, Cys-837 palmitoylation does not affect cell surface expression but regulates stimulation-dependent endocytosis. Post-translationally, phosphorylated at Ser-862 by PRKCG; phosphorylation increases plasma membrane-associated GRI4 expression.

It localises to the cell membrane. The protein resides in the postsynaptic cell membrane. The protein localises to the cell projection. It is found in the dendrite. It carries out the reaction Ca(2+)(in) = Ca(2+)(out). It catalyses the reaction Na(+)(in) = Na(+)(out). The catalysed reaction is Mg(2+)(in) = Mg(2+)(out). Functionally, ionotropic glutamate receptor that functions as a ligand-gated cation channel, gated by L-glutamate and glutamatergic agonists such as alpha-amino-3-hydroxy-5-methyl-4-isoxazolepropionic acid (AMPA), quisqualic acid, and kainic acid. L-glutamate acts as an excitatory neurotransmitter at many synapses in the central nervous system and plays an important role in fast excitatory synaptic transmission. Binding of the excitatory neurotransmitter L-glutamate induces a conformation change, leading to the opening of the cation channel, and thereby converts the chemical signal to an electrical impulse upon entry of monovalent and divalent cations such as sodium and calcium. The receptor then desensitizes rapidly and enters a transient inactive state, characterized by the presence of bound agonist. In the presence of CACNG8, shows resensitization which is characterized by a delayed accumulation of current flux upon continued application of L-glutamate. This Macaca fascicularis (Crab-eating macaque) protein is Glutamate receptor 4.